The primary structure comprises 1174 residues: Probable pyruvate-flavodoxin oxidoreductase (1174 aa).

4Fe-4S ferredoxin-type domains are found at residues 680-709 (EIPIWKEELCTQCNHCVAACPHSAIRAKVV) and 736-765 (YVLQVAPEDCTGCNLCVEVCPAKDRQNPEI). 12 residues coordinate [4Fe-4S] cluster: cysteine 689, cysteine 692, cysteine 695, cysteine 699, cysteine 745, cysteine 748, cysteine 751, cysteine 755, cysteine 819, cysteine 822, cysteine 847, and cysteine 1071.

This sequence belongs to the pyruvate:ferredoxin/flavodoxin oxidoreductase family. The cofactor is [4Fe-4S] cluster.

The enzyme catalyses oxidized [flavodoxin] + pyruvate + CoA + 2 H(+) = reduced [flavodoxin] + acetyl-CoA + CO2. Its function is as follows. Oxidoreductase required for the transfer of electrons from pyruvate to flavodoxin. The chain is Probable pyruvate-flavodoxin oxidoreductase (ydbK) from Escherichia coli (strain K12).